Here is a 64-residue protein sequence, read N- to C-terminus: Large ribosomal subunit protein bL35 (64 aa).

A disordered region spans residues 1 to 21; it reads MPKMKTNRGAAKRFKVKKSGK. Residues 10 to 21 show a composition bias toward basic residues; the sequence is AAKRFKVKKSGK.

The protein belongs to the bacterial ribosomal protein bL35 family.

The sequence is that of Large ribosomal subunit protein bL35 from Nautilia profundicola (strain ATCC BAA-1463 / DSM 18972 / AmH).